A 359-amino-acid polypeptide reads, in one-letter code: DNA polymerase IV (359 aa).

The UmuC domain occupies 4–185 (IIHIDMDCYF…LSLRKIPGVG (182 aa)). Residues Asp-8 and Asp-103 each contribute to the Mg(2+) site. Glu-104 is a catalytic residue.

Belongs to the DNA polymerase type-Y family. In terms of assembly, monomer. Mg(2+) is required as a cofactor.

It localises to the cytoplasm. The catalysed reaction is DNA(n) + a 2'-deoxyribonucleoside 5'-triphosphate = DNA(n+1) + diphosphate. Poorly processive, error-prone DNA polymerase involved in untargeted mutagenesis. Copies undamaged DNA at stalled replication forks, which arise in vivo from mismatched or misaligned primer ends. These misaligned primers can be extended by PolIV. Exhibits no 3'-5' exonuclease (proofreading) activity. May be involved in translesional synthesis, in conjunction with the beta clamp from PolIII. The chain is DNA polymerase IV from Shewanella sp. (strain MR-4).